The chain runs to 89 residues: Large ribosomal subunit protein bL27 (89 aa).

Residues 1–22 (MAHKKAGGSSRNGRDSESKRLG) are disordered.

It belongs to the bacterial ribosomal protein bL27 family.

The protein is Large ribosomal subunit protein bL27 of Bartonella henselae (strain ATCC 49882 / DSM 28221 / CCUG 30454 / Houston 1) (Rochalimaea henselae).